The following is a 635-amino-acid chain: Biosynthetic arginine decarboxylase (635 aa).

K100 is modified (N6-(pyridoxal phosphate)lysine). 282-292 (VDIGGGLGVDY) contributes to the substrate binding site.

This sequence belongs to the Orn/Lys/Arg decarboxylase class-II family. SpeA subfamily. Requires Mg(2+) as cofactor. It depends on pyridoxal 5'-phosphate as a cofactor.

It carries out the reaction L-arginine + H(+) = agmatine + CO2. It functions in the pathway amine and polyamine biosynthesis; agmatine biosynthesis; agmatine from L-arginine: step 1/1. In terms of biological role, catalyzes the biosynthesis of agmatine from arginine. The polypeptide is Biosynthetic arginine decarboxylase (Geobacter metallireducens (strain ATCC 53774 / DSM 7210 / GS-15)).